The sequence spans 574 residues: Frizzled-7 (574 aa).

The signal sequence occupies residues 1–32; the sequence is MRDPGAAAPLSSLGLCALVLALLGALSAGAGA. Residues 33 to 256 are Extracellular-facing; the sequence is QPYHGEKGIS…EEERRFARLW (224 aa). The FZ domain maps to 44–163; it reads PDHGFCQPIS…HGAGEICVGQ (120 aa). 5 cysteine pairs are disulfide-bonded: C49-C110, C57-C103, C94-C131, C120-C160, and C124-C148. N-linked (GlcNAc...) asparagine glycosylation is present at N63. A glycan (N-linked (GlcNAc...) asparagine) is linked at N164. The chain crosses the membrane as a helical span at residues 257–277; sequence VGVWSVLCCASTLFTVLTYLV. Topologically, residues 278 to 288 are cytoplasmic; the sequence is DMRRFSYPERP. Residues 289-309 traverse the membrane as a helical segment; the sequence is IIFLSGCYFMVAVAHVAGFLL. The Extracellular segment spans residues 310 to 336; sequence EDRAVCVERFSDDGYRTVAQGTKKEGC. Residues 337–357 traverse the membrane as a helical segment; that stretch reads TILFMVLYFFGMASSIWWVIL. The Cytoplasmic segment spans residues 358-379; it reads SLTWFLAAGMKWGHEAIEANSQ. The helical transmembrane segment at 380 to 400 threads the bilayer; sequence YFHLAAWAVPAVKTITILAMG. Topologically, residues 401-423 are extracellular; that stretch reads QVDGDLLSGVCYVGLSSVDALRG. A helical membrane pass occupies residues 424-444; sequence FVLAPLFVYLFIGTSFLLAGF. Over 445-470 the chain is Cytoplasmic; it reads VSLFRIRTIMKHDGTKTEKLEKLMVR. The helical transmembrane segment at 471 to 491 threads the bilayer; it reads IGVFSVLYTVPATIVLACYFY. The Extracellular portion of the chain corresponds to 492–528; the sequence is EQAFREHWERTWLLQTCKSYAVPCPPGHFPPMSPDFT. Residues 529–549 traverse the membrane as a helical segment; sequence VFMIKYLMTMIVGITTGFWIW. Over 550-574 the chain is Cytoplasmic; it reads SGKTLQSWRRFYHRLSHSSKGETAV. Positions 552 to 557 match the Lys-Thr-X-X-X-Trp motif, mediates interaction with the PDZ domain of Dvl family members motif; the sequence is KTLQSW. Positions 572–574 match the PDZ-binding motif; that stretch reads TAV.

The protein belongs to the G-protein coupled receptor Fz/Smo family. Interacts with MAGI3. Interacts with DVL1. Interacts with CCDC88C/DAPLE; the interaction displaces DVL1 from FZD7, leading to inhibition of canonical Wnt signaling and triggering of non-canonical Wnt responses. Interacts with MYOC. Binds to SDCBP; this interaction is increased by inositol trisphosphate (IP3). Interacts with glypican GPC3. In terms of assembly, (Microbial infection) Interacts with C.difficile toxin TcdB; frizzled receptors constitute the major host receptors for TcdB in the colonic epithelium. Post-translationally, ubiquitinated by ZNRF3, leading to its degradation by the proteasome. High expression in adult skeletal muscle and fetal kidney, followed by fetal lung, adult heart, brain, and placenta. Specifically expressed in squamous cell esophageal carcinomas.

The protein localises to the cell membrane. Its subcellular location is the endosome membrane. Functionally, receptor for Wnt proteins. Most frizzled receptors are coupled to the beta-catenin canonical signaling pathway, which leads to the activation of disheveled proteins, inhibition of GSK-3 kinase, nuclear accumulation of beta-catenin and activation of Wnt target genes. A second signaling pathway involving PKC and calcium fluxes has been seen for some family members, but it is not yet clear if it represents a distinct pathway or if it can be integrated in the canonical pathway, as PKC seems to be required for Wnt-mediated inactivation of GSK-3 kinase. Both pathways seem to involve interactions with G-proteins. Activation by WNT8 induces expression of beta-catenin target genes. Following ligand activation, binds to CCDC88C/DAPLE which displaces DVL1 from FZD7 and leads to inhibition of canonical Wnt signaling, activation of G-proteins by CCDC88C and triggering of non-canonical Wnt responses. May be involved in transduction and intercellular transmission of polarity information during tissue morphogenesis and/or in differentiated tissues. In terms of biological role, (Microbial infection) Acts as a receptor for C.difficile toxin TcdB in the colonic epithelium. The protein is Frizzled-7 (FZD7) of Homo sapiens (Human).